A 381-amino-acid polypeptide reads, in one-letter code: uncharacterized protein (381 aa).

A disordered region spans residues 176 to 292 (HAAGKIKKSK…EPMVDETPQN (117 aa)). A compositionally biased stretch (basic residues) spans 177–186 (AAGKIKKSKN). Residues 187–212 (QKKDGTLSRPLGKKENKSVVKVKIEE) show a composition bias toward basic and acidic residues. The segment covering 276–286 (DEEDEDEEPMV) has biased composition (acidic residues).

This is an uncharacterized protein from Caenorhabditis elegans.